The following is a 514-amino-acid chain: Bifunctional purine biosynthesis protein PurH (514 aa).

The region spanning 1–145 (MIKRALISVS…KNYQDVVVIV (145 aa)) is the MGS-like domain.

Belongs to the PurH family.

The enzyme catalyses (6R)-10-formyltetrahydrofolate + 5-amino-1-(5-phospho-beta-D-ribosyl)imidazole-4-carboxamide = 5-formamido-1-(5-phospho-D-ribosyl)imidazole-4-carboxamide + (6S)-5,6,7,8-tetrahydrofolate. It carries out the reaction IMP + H2O = 5-formamido-1-(5-phospho-D-ribosyl)imidazole-4-carboxamide. Its pathway is purine metabolism; IMP biosynthesis via de novo pathway; 5-formamido-1-(5-phospho-D-ribosyl)imidazole-4-carboxamide from 5-amino-1-(5-phospho-D-ribosyl)imidazole-4-carboxamide (10-formyl THF route): step 1/1. It functions in the pathway purine metabolism; IMP biosynthesis via de novo pathway; IMP from 5-formamido-1-(5-phospho-D-ribosyl)imidazole-4-carboxamide: step 1/1. The protein is Bifunctional purine biosynthesis protein PurH of Acetivibrio thermocellus (strain ATCC 27405 / DSM 1237 / JCM 9322 / NBRC 103400 / NCIMB 10682 / NRRL B-4536 / VPI 7372) (Clostridium thermocellum).